The primary structure comprises 519 residues: Na(+)/H(+) exchange regulatory cofactor NHE-RF3 (519 aa).

A PDZ 1 domain is found at 9–90 (ECKLSKQEGQ…SVTLLVLDGD (82 aa)). 6 positions are modified to phosphoserine: S108, S148, S192, S250, S334, and S348. 2 consecutive PDZ domains span residues 128-215 (EPCA…VDKE) and 243-323 (VVVI…LDKE). The disordered stretch occupies residues 348–374 (SVKEGPAPIPAPLEATGSEPTEDAEGH). Residues 378 to 458 (LCRLLKEDDS…HVTLLVCGKM (81 aa)) enclose the PDZ 4 domain. T451 and T488 each carry phosphothreonine. The interval 479 to 519 (VAGPDEKGETSAESEHDAHPAKDRTLSTASHSSSNSEDTEM) is disordered. A compositionally biased stretch (basic and acidic residues) spans 482–503 (PDEKGETSAESEHDAHPAKDRT). 2 positions are modified to phosphoserine: S489 and S492. At T503 the chain carries Phosphothreonine. Over residues 505-519 (STASHSSSNSEDTEM) the composition is skewed to low complexity. 5 positions are modified to phosphoserine: S508, S510, S511, S512, and S514.

Belongs to the NHER family. Interacts with PDZK1IP1 and ABCC2. Binds to the C-terminal region of SLC26A3. Interacts (via C-terminal PDZ domain) with SLC26A6 (via C-terminal domain). Interacts (via C-terminal PDZ domain) with SLC9A3 (via C-terminal domain). Component of a complex, composed of PDZK1, SYNGAP1, KLHL17 and NMDA receptors. Interacts (via PDZ1 domain) directly with KLHL17; the interaction is important for integrity of actin cytoskeleton structures in neurons. Forms a heterodimeric complex with NHERF1. Interacts with AKAP2, BCR, CFTR, SLCO1A1, SLC22A12, SLC22A4, SLC22A5, SLC26A6, NHERF2 and SLC17A1. Interacts (via the first PDZ domain) with PTGIR (via non-isoprenylated C-terminus). Interacts (via PDZ domains 1 and 3) with SCARB1 (C-terminal domain). Interacts (via PDZ domains 1 and 3) with SLC5A8 (via PDZ-binding motif); interaction increases nicotinate transport activity of SLC5A8. In terms of tissue distribution, expressed in kidney, liver, small intestine. brain, lung, and testis (at protein level).

It localises to the membrane. The protein resides in the cell membrane. A scaffold protein that connects plasma membrane proteins and regulatory components, regulating their surface expression in epithelial cells apical domains. May be involved in the coordination of a diverse range of regulatory processes for ion transport and second messenger cascades. In complex with NHERF1, may cluster proteins that are functionally dependent in a mutual fashion and modulate the trafficking and the activity of the associated membrane proteins. May play a role in the cellular mechanisms associated with multidrug resistance through its interaction with ABCC2 and PDZK1IP1. May potentiate the CFTR chloride channel activity. Required for normal cell-surface expression of SCARB1. Plays a role in maintaining normal plasma cholesterol levels via its effects on SCARB1. Plays a role in the normal localization and function of the chloride-anion exchanger SLC26A6 to the plasma membrane in the brush border of the proximal tubule of the kidney. May be involved in the regulation of proximal tubular Na(+)-dependent inorganic phosphate cotransport therefore playing an important role in tubule function. The chain is Na(+)/H(+) exchange regulatory cofactor NHE-RF3 (Pdzk1) from Mus musculus (Mouse).